Here is a 747-residue protein sequence, read N- to C-terminus: Major facilitator superfamily domain-containing protein 6-B (747 aa).

11 helical membrane-spanning segments follow: residues 15–35 (LLFF…CVLQ), 75–95 (KAVL…IGFV), 222–242 (TIFL…APAV), 271–291 (WGIA…TIFI), 306–326 (IAFI…TQFH), 391–411 (VLFV…FLFW), 420–440 (TTLF…AYFI), 453–470 (VLYI…YISY), 485–507 (GLTH…PPAL), 520–540 (LGLG…FFGA), and 546–566 (GLGM…WLLG). 2 stretches are compositionally biased toward polar residues: residues 597 to 606 (NQSTSQPNSD) and 652 to 668 (NNDC…QTSA). Disordered regions lie at residues 597–625 (NQST…NKPA) and 652–747 (NNDC…PTTH). Residues 675-685 (STSSQPNASSS) show a composition bias toward low complexity.

This sequence belongs to the major facilitator superfamily. MFSD6 family.

The protein localises to the membrane. The polypeptide is Major facilitator superfamily domain-containing protein 6-B (mfsd6b) (Danio rerio (Zebrafish)).